The sequence spans 324 residues: Non-homologous end joining protein Ku 1 (324 aa).

The Ku domain maps to 10–193; it reads INFGLVTIPV…AKPSDKEIQM (184 aa). A disordered region spans residues 256–324; that stretch reads QARRGRGGQV…SGGRRRRRAS (69 aa). The segment covering 281 to 292 has biased composition (basic and acidic residues); sequence AELDKKAKELGI.

It belongs to the prokaryotic Ku family. As to quaternary structure, homodimer. Interacts with LigD.

With LigD forms a non-homologous end joining (NHEJ) DNA repair enzyme, which repairs dsDNA breaks with reduced fidelity. Binds linear dsDNA with 5'- and 3'- overhangs but not closed circular dsDNA nor ssDNA. Recruits and stimulates the ligase activity of LigD. This chain is Non-homologous end joining protein Ku 1, found in Saccharopolyspora erythraea (strain ATCC 11635 / DSM 40517 / JCM 4748 / NBRC 13426 / NCIMB 8594 / NRRL 2338).